The following is a 437-amino-acid chain: Purple acid phosphatase 21 (437 aa).

Positions 1–25 (MKKMKIFGFLISFSLFFLSPFVCQA) are cleaved as a signal peptide. N30 carries N-linked (GlcNAc...) asparagine glycosylation. Residues D152, D179, and Y182 each coordinate Fe cation. D179 is a binding site for Zn(2+). The Zn(2+) site is built by N212 and H296. Position 212 (N212) interacts with substrate. H306 acts as the Proton donor in catalysis. H333 is a binding site for Zn(2+). Substrate is bound at residue 333–335 (HVH). H335 is a binding site for Fe cation.

This sequence belongs to the metallophosphoesterase superfamily. Purple acid phosphatase family. Homodimer. The cofactor is Fe cation. Zn(2+) is required as a cofactor. As to expression, expressed flowers and siliques.

It is found in the secreted. The catalysed reaction is a phosphate monoester + H2O = an alcohol + phosphate. This Arabidopsis thaliana (Mouse-ear cress) protein is Purple acid phosphatase 21 (PAP21).